Reading from the N-terminus, the 115-residue chain is Large ribosomal subunit protein bL20 (115 aa).

It belongs to the bacterial ribosomal protein bL20 family.

Binds directly to 23S ribosomal RNA and is necessary for the in vitro assembly process of the 50S ribosomal subunit. It is not involved in the protein synthesizing functions of that subunit. This chain is Large ribosomal subunit protein bL20, found in Prochlorococcus marinus (strain AS9601).